The primary structure comprises 355 residues: Protein ECERIFERUM 16 (355 aa).

Disordered regions lie at residues 1 to 60 (MDSK…LPSN) and 296 to 315 (HSST…KIHM). Positions 7-28 (AKSKRAHTLHHSKKSHSVHKPK) are enriched in basic residues. Composition is skewed to polar residues over residues 41-53 (QGNQ…QSRR) and 296-310 (HSST…NPSD).

As to quaternary structure, interacts with RST1. In terms of tissue distribution, expressed in taproots, lateral roots, root tips, leaf veins, cauline leaves, inflorescences, flowers, and siliques.

It localises to the cytoplasm. It is found in the cytosol. The protein resides in the endoplasmic reticulum. Together with RST1, acts as a cofactor of the cytoplasmic exosome and connects the cytosolic RNA exosome to the SKI complex. Acts as a post-transcriptional gene silencing (PTGS) suppressor. CER16/RIPR can, like RST1 suppress the production of small interfering RNAs (siRNAs) from the CER3 locus, which is involved in cuticule membrane and wax production, and in the typhine and sporopollenin biosynthesis of pollen. The polypeptide is Protein ECERIFERUM 16 (Arabidopsis thaliana (Mouse-ear cress)).